We begin with the raw amino-acid sequence, 190 residues long: Cancer-related nucleoside-triphosphatase (190 aa).

A2 carries the N-acetylalanine modification. ATP is bound by residues 9–16 and 109–116; these read GPPGVGKT and VCVIDEIG. N6-acetyllysine is present on K165.

It belongs to the THEP1 NTPase family. In terms of assembly, monomer.

The enzyme catalyses a ribonucleoside 5'-triphosphate + H2O = a ribonucleoside 5'-diphosphate + phosphate + H(+). It carries out the reaction 5-methyl-UTP + H2O = 5-methyl-UDP + phosphate + H(+). It catalyses the reaction CTP + H2O = CDP + phosphate + H(+). The catalysed reaction is ATP + H2O = ADP + phosphate + H(+). The enzyme catalyses GTP + H2O = GDP + phosphate + H(+). Functionally, has nucleotide phosphatase activity towards ATP, GTP, CTP, TTP and UTP. Hydrolyzes nucleoside diphosphates with lower efficiency. The chain is Cancer-related nucleoside-triphosphatase from Homo sapiens (Human).